A 341-amino-acid polypeptide reads, in one-letter code: Trace amine-associated receptor 13c (341 aa).

The Extracellular portion of the chain corresponds to 1–34 (MDLSSQEYDPSQFCFPAVNNSCLKGTHHVSTQTV). The N-linked (GlcNAc...) asparagine glycan is linked to Asn19. 2 cysteine pairs are disulfide-bonded: Cys22–Cys186 and Cys105–Cys186. Residues 35 to 55 (VYLILASAMTVTVLGNSVVII) traverse the membrane as a helical segment. The Cytoplasmic segment spans residues 56–68 (SIAHFKQLQTPTN). A helical membrane pass occupies residues 69-89 (ILVMSLALADLLLGLVVMPFS). Residues 90-105 (MIRSVDGCWYYGETFC) are Extracellular-facing. Residues 106-126 (LLHTGFDLFLTSVSIFHLIFI) form a helical membrane-spanning segment. Over 127–147 (AVDRHQAVCFPLQYPTRITIP) the chain is Cytoplasmic. A helical transmembrane segment spans residues 148–168 (VAWVMVMISWSMAAFYSYGVV). Residues 169–195 (YSKANLEGLEEYIASVYCMGGCTLYFN) lie on the Extracellular side of the membrane. Residues 196–219 (ALWSVLDTLLTFFLPCSVMVGLYA) traverse the membrane as a helical segment. The Cytoplasmic segment spans residues 220-257 (RIFVVAKKHIKSITEANQNENENVFKNPRRSERKAAKT). A helical membrane pass occupies residues 258 to 278 (LGIVVGAFILCWLPFFINSLV). Over 279-292 (DPYINFSTPYALFD) the chain is Extracellular. Asn283 is a glycosylation site (N-linked (GlcNAc...) asparagine). The helical transmembrane segment at 293-313 (AFGWLGYTNSTLNPIIYGLFY) threads the bilayer. The Cytoplasmic segment spans residues 314–341 (PWFRKTLSLIVTLRIFEPNSSDINLFTV).

It belongs to the G-protein coupled receptor 1 family. Expressed in olfactory epithelium (at protein level). Detected in a sparse population of olfactory sensory neurons.

The protein resides in the cell membrane. In terms of biological role, olfactory receptor for medium length odd-chained diamines including cadaverine which is generated by bacterial decarboxylation of the basic amino acid lysine and contributes to the odor of decomposing tissue. Mediates pronounced innate aversion behavior to cadaverine. The sequence is that of Trace amine-associated receptor 13c from Danio rerio (Zebrafish).